Consider the following 227-residue polypeptide: Phosphoribosylformylglycinamidine synthase subunit PurQ (227 aa).

One can recognise a Glutamine amidotransferase type-1 domain in the interval Phe3 to Thr225. The active-site Nucleophile is the Cys86. Active-site residues include His194 and Glu196.

As to quaternary structure, part of the FGAM synthase complex composed of 1 PurL, 1 PurQ and 2 PurS subunits.

The protein localises to the cytoplasm. The enzyme catalyses N(2)-formyl-N(1)-(5-phospho-beta-D-ribosyl)glycinamide + L-glutamine + ATP + H2O = 2-formamido-N(1)-(5-O-phospho-beta-D-ribosyl)acetamidine + L-glutamate + ADP + phosphate + H(+). It catalyses the reaction L-glutamine + H2O = L-glutamate + NH4(+). The protein operates within purine metabolism; IMP biosynthesis via de novo pathway; 5-amino-1-(5-phospho-D-ribosyl)imidazole from N(2)-formyl-N(1)-(5-phospho-D-ribosyl)glycinamide: step 1/2. Part of the phosphoribosylformylglycinamidine synthase complex involved in the purines biosynthetic pathway. Catalyzes the ATP-dependent conversion of formylglycinamide ribonucleotide (FGAR) and glutamine to yield formylglycinamidine ribonucleotide (FGAM) and glutamate. The FGAM synthase complex is composed of three subunits. PurQ produces an ammonia molecule by converting glutamine to glutamate. PurL transfers the ammonia molecule to FGAR to form FGAM in an ATP-dependent manner. PurS interacts with PurQ and PurL and is thought to assist in the transfer of the ammonia molecule from PurQ to PurL. This Bacillus subtilis (strain 168) protein is Phosphoribosylformylglycinamidine synthase subunit PurQ.